Here is a 352-residue protein sequence, read N- to C-terminus: Isopentenyl-diphosphate delta-isomerase (352 aa).

Substrate is bound at residue 6-7 (RK). Residues 63–65 (AMT), Ser93, and Asn122 contribute to the FMN site. 93-95 (SQR) contacts substrate. Residue Gln160 coordinates substrate. Glu161 contacts Mg(2+). FMN contacts are provided by residues Lys192, Thr221, 271–273 (GIR), and 292–293 (SQ).

The protein belongs to the IPP isomerase type 2 family. In terms of assembly, homooctamer. Dimer of tetramers. FMN is required as a cofactor. The cofactor is NADPH. Mg(2+) serves as cofactor.

The protein resides in the cytoplasm. The catalysed reaction is isopentenyl diphosphate = dimethylallyl diphosphate. In terms of biological role, involved in the biosynthesis of isoprenoids. Catalyzes the 1,3-allylic rearrangement of the homoallylic substrate isopentenyl (IPP) to its allylic isomer, dimethylallyl diphosphate (DMAPP). In Pyrobaculum arsenaticum (strain DSM 13514 / JCM 11321 / PZ6), this protein is Isopentenyl-diphosphate delta-isomerase.